Here is a 262-residue protein sequence, read N- to C-terminus: Ubiquinone biosynthesis protein COQ4, mitochondrial (262 aa).

Positions 154, 155, 158, and 170 each coordinate Zn(2+). The segment at 243–262 is disordered; it reads LGIEQPPDLRQMKKDMAKKK. The segment covering 252 to 262 has biased composition (basic and acidic residues); it reads RQMKKDMAKKK.

It belongs to the COQ4 family. As to quaternary structure, component of a multi-subunit COQ enzyme complex, composed of at least COQ3, COQ4, COQ5, COQ6, COQ7 and COQ9. It depends on Zn(2+) as a cofactor.

Its subcellular location is the mitochondrion inner membrane. It catalyses the reaction a 4-hydroxy-3-methoxy-5-(all-trans-polyprenyl)benzoate + H(+) = a 2-methoxy-6-(all-trans-polyprenyl)phenol + CO2. It participates in cofactor biosynthesis; ubiquinone biosynthesis. Its function is as follows. Lyase that catalyzes the C1-decarboxylation of 4-hydroxy-3-methoxy-5-(all-trans-polyprenyl)benzoic acid into 2-methoxy-6-(all-trans-polyprenyl)phenol during ubiquinone biosynthesis. In Yarrowia lipolytica (strain CLIB 122 / E 150) (Yeast), this protein is Ubiquinone biosynthesis protein COQ4, mitochondrial.